Consider the following 473-residue polypeptide: Bifunctional protein HldE (473 aa).

The tract at residues 1–317 is ribokinase; that stretch reads MTHGLPHFTS…LQQALHPRAI (317 aa). Position 195–198 (195–198) interacts with ATP; it reads NLAE. The active site involves aspartate 264. Residues 343-473 form a cytidylyltransferase region; the sequence is MTNGCFDILH…SQIIDIIRKN (131 aa).

This sequence in the N-terminal section; belongs to the carbohydrate kinase PfkB family. The protein in the C-terminal section; belongs to the cytidylyltransferase family. Homodimer.

The enzyme catalyses D-glycero-beta-D-manno-heptose 7-phosphate + ATP = D-glycero-beta-D-manno-heptose 1,7-bisphosphate + ADP + H(+). It catalyses the reaction D-glycero-beta-D-manno-heptose 1-phosphate + ATP + H(+) = ADP-D-glycero-beta-D-manno-heptose + diphosphate. It functions in the pathway nucleotide-sugar biosynthesis; ADP-L-glycero-beta-D-manno-heptose biosynthesis; ADP-L-glycero-beta-D-manno-heptose from D-glycero-beta-D-manno-heptose 7-phosphate: step 1/4. It participates in nucleotide-sugar biosynthesis; ADP-L-glycero-beta-D-manno-heptose biosynthesis; ADP-L-glycero-beta-D-manno-heptose from D-glycero-beta-D-manno-heptose 7-phosphate: step 3/4. Functionally, catalyzes the phosphorylation of D-glycero-D-manno-heptose 7-phosphate at the C-1 position to selectively form D-glycero-beta-D-manno-heptose-1,7-bisphosphate. In terms of biological role, catalyzes the ADP transfer from ATP to D-glycero-beta-D-manno-heptose 1-phosphate, yielding ADP-D-glycero-beta-D-manno-heptose. The protein is Bifunctional protein HldE of Nitrosococcus oceani (strain ATCC 19707 / BCRC 17464 / JCM 30415 / NCIMB 11848 / C-107).